A 391-amino-acid polypeptide reads, in one-letter code: MREKRKYFIAERVLLIKRSKIRELFERASKMEDVISLGIGEPDFDTPKNIKEAAKRALDEGWTHYTPNAGIPELREAVVEYYKKFYGIDIEVENVIITAGAYEGTYLAFESLLERGDEVIIPDPAFVSYAEDAKVAEAKPVRIPLREENNFLPDPNELLEKISKNTRMIVINYPNNPTGATLDKELAKTIADIAEDYNIYILSDEPYEHFIYEDAKHYPMIKFAPENTILANSFSKTFAMTGWRLGFVVAPSQVIKEMTKLHAYVIGNVASFVQIAGIEALRSEESWKAVEEMKKEYNERRKIVVKRLKNMPGIKVKEPKGAFYVFPNISGTGMSSEKFSEWLLEKARVVVIPGTAFGRMGEGYVRISYATSKEKLIEAMNRIEKALEGEK.

L-aspartate is bound by residues Gly-40 and Asn-176. At Lys-236 the chain carries N6-(pyridoxal phosphate)lysine. Position 366 (Arg-366) interacts with L-aspartate.

Belongs to the class-I pyridoxal-phosphate-dependent aminotransferase family. As to quaternary structure, homodimer. It depends on pyridoxal 5'-phosphate as a cofactor.

It localises to the cytoplasm. The enzyme catalyses L-aspartate + 2-oxoglutarate = oxaloacetate + L-glutamate. The polypeptide is Aspartate aminotransferase (aspC) (Pyrococcus horikoshii (strain ATCC 700860 / DSM 12428 / JCM 9974 / NBRC 100139 / OT-3)).